The chain runs to 217 residues: tRNA 5-hydroxyuridine methyltransferase (217 aa).

S-adenosyl-L-methionine is bound by residues Met-38, Ser-68, Glu-85, 113–114 (DA), and Asp-133. Positions 133, 159, and 160 each coordinate Mg(2+).

The protein belongs to the class I-like SAM-binding methyltransferase superfamily. Cation-dependent O-methyltransferase family. In terms of assembly, homodimer.

The enzyme catalyses 5-hydroxyuridine(34) in tRNA + S-adenosyl-L-methionine = 5-methoxyuridine(34) in tRNA + S-adenosyl-L-homocysteine + H(+). In terms of biological role, catalyzes the methylation of 5-hydroxyuridine (ho5U) to form 5-methoxyuridine (mo5U) at position 34 in tRNAs. The protein is tRNA 5-hydroxyuridine methyltransferase of Bacillus subtilis (strain 168).